The chain runs to 322 residues: NADH-quinone oxidoreductase subunit H (322 aa).

The next 8 membrane-spanning stretches (helical) occupy residues 12-32 (VGKA…MSFI), 79-99 (IFIL…AVVP), 111-131 (VGLL…LFAG), 151-171 (LSYE…TGSF), 183-203 (LWNV…GVAV), 234-254 (FFVG…TLFF), 262-282 (LPPF…FILL), and 301-321 (VCLP…LINV).

It belongs to the complex I subunit 1 family. NDH-1 is composed of 14 different subunits. Subunits NuoA, H, J, K, L, M, N constitute the membrane sector of the complex.

It is found in the cell inner membrane. It catalyses the reaction a quinone + NADH + 5 H(+)(in) = a quinol + NAD(+) + 4 H(+)(out). NDH-1 shuttles electrons from NADH, via FMN and iron-sulfur (Fe-S) centers, to quinones in the respiratory chain. The immediate electron acceptor for the enzyme in this species is believed to be ubiquinone. Couples the redox reaction to proton translocation (for every two electrons transferred, four hydrogen ions are translocated across the cytoplasmic membrane), and thus conserves the redox energy in a proton gradient. This subunit may bind ubiquinone. The polypeptide is NADH-quinone oxidoreductase subunit H (Aeromonas salmonicida (strain A449)).